Reading from the N-terminus, the 207-residue chain is Serotonin N-acetyltransferase (207 aa).

Position 31 is a phosphothreonine; by PKA (Thr31). An N-acetyltransferase domain is found at 35–196 (NEFRCLTPKD…TFTEMHCSLR (162 aa)). Leu124 is a substrate binding site. Acetyl-CoA contacts are provided by residues 124 to 126 (LAV) and 132 to 137 (QQGKGS). Position 159 (Met159) interacts with substrate. 168–170 (YQR) lines the acetyl-CoA pocket. Ser205 is modified (phosphoserine).

This sequence belongs to the acetyltransferase family. AANAT subfamily. Monomer. Interacts with several 14-3-3 proteins, including YWHAB, YWHAE, YWHAG and YWHAZ, preferentially when phosphorylated at Thr-31. Phosphorylation on Ser-205 also allows binding to YWHAZ, but with lower affinity. The interaction with YWHAZ considerably increases affinity for arylalkylamines and acetyl-CoA and protects the enzyme from dephosphorylation and proteasomal degradation. It may also prevent thiol-dependent inactivation. Post-translationally, cAMP-dependent phosphorylation on both N-terminal Thr-31 and C-terminal Ser-205 regulates AANAT activity by promoting interaction with 14-3-3 proteins. In terms of tissue distribution, high levels in pineal gland and retina.

It is found in the cytoplasm. It carries out the reaction a 2-arylethylamine + acetyl-CoA = an N-acetyl-2-arylethylamine + CoA + H(+). Its pathway is aromatic compound metabolism; melatonin biosynthesis; melatonin from serotonin: step 1/2. In terms of biological role, controls the night/day rhythm of melatonin production in the pineal gland. Catalyzes the N-acetylation of serotonin into N-acetylserotonin, the penultimate step in the synthesis of melatonin. This is Serotonin N-acetyltransferase (AANAT) from Bos taurus (Bovine).